The following is a 307-amino-acid chain: Protoheme IX farnesyltransferase (307 aa).

9 consecutive transmembrane segments (helical) span residues 29–49 (VISL…RGWP), 51–71 (LGLL…AGVF), 101–120 (AAIF…WVWA), 124–143 (AAWM…TLWL), 151–171 (IVLG…AVTG), 179–199 (FLFA…ALMI), 218–238 (RLTV…SVMP), 239–259 (VFLG…GWLL), and 280–300 (VAVP…VAGA).

It belongs to the UbiA prenyltransferase family. Protoheme IX farnesyltransferase subfamily.

The protein resides in the cell membrane. The catalysed reaction is heme b + (2E,6E)-farnesyl diphosphate + H2O = Fe(II)-heme o + diphosphate. The protein operates within porphyrin-containing compound metabolism; heme O biosynthesis; heme O from protoheme: step 1/1. Converts heme B (protoheme IX) to heme O by substitution of the vinyl group on carbon 2 of heme B porphyrin ring with a hydroxyethyl farnesyl side group. The sequence is that of Protoheme IX farnesyltransferase from Deinococcus geothermalis (strain DSM 11300 / CIP 105573 / AG-3a).